A 352-amino-acid chain; its full sequence is Phosphatase Herzog (352 aa).

Residues 1–102 (MDATSIITQV…PLPDQQRYLL (102 aa)) are prion-like domain necessary for both protein assembly and membrane targeting. Residues 103-267 (PQVRLTDMHR…ELIPLFEKLS (165 aa)) are mediates substrate recognition. Positions 108 to 266 (TDMHRKCMVI…RELIPLFEKL (159 aa)) constitute an FCP1 homology domain. Disordered stretches follow at residues 284–310 (NNQT…LQQQ) and 332–352 (TMLN…LQKT).

In terms of assembly, monomer. Forms higher-order protein aggregates with amyloid-like features during gastrulation. Interacts with babo, dah, Irk1, pch2, Ras64B, sax and Src64B.

It is found in the cell membrane. It catalyses the reaction O-phospho-L-seryl-[protein] + H2O = L-seryl-[protein] + phosphate. With respect to regulation, phosphatase activity requires amyloid-like aggregation on the membrane. Its function is as follows. Prion-like membrane-associated phosphatase. Phosphatase activity depends on amyloid-like assembly at the membrane. Might have a role in establishment of segment polarity in embryos. This chain is Phosphatase Herzog, found in Drosophila melanogaster (Fruit fly).